The sequence spans 416 residues: Histidinol dehydrogenase (416 aa).

Residues Tyr117, Gln178, and Asn201 each coordinate NAD(+). Residues Thr224, Gln246, and His249 each contribute to the substrate site. Positions 246 and 249 each coordinate Zn(2+). Residues Glu314 and His315 each act as proton acceptor in the active site. The substrate site is built by His315, Asp348, Glu402, and His407. Zn(2+) is bound at residue Asp348. His407 is a binding site for Zn(2+).

It belongs to the histidinol dehydrogenase family. The cofactor is Zn(2+).

The catalysed reaction is L-histidinol + 2 NAD(+) + H2O = L-histidine + 2 NADH + 3 H(+). Its pathway is amino-acid biosynthesis; L-histidine biosynthesis; L-histidine from 5-phospho-alpha-D-ribose 1-diphosphate: step 9/9. Its function is as follows. Catalyzes the sequential NAD-dependent oxidations of L-histidinol to L-histidinaldehyde and then to L-histidine. The sequence is that of Histidinol dehydrogenase from Staphylococcus aureus (strain Mu50 / ATCC 700699).